Reading from the N-terminus, the 592-residue chain is Signal peptide peptidase-like 2B (592 aa).

The signal sequence occupies residues 1–25 (MAAAVAAALARLLAAFLLLAAQVAC). Over 26–174 (EYGMVHVVSQ…APKEPVLDYN (149 aa)) the chain is Lumenal. Positions 71 to 149 (TASLLCSAAD…VALLSYKDML (79 aa)) constitute a PA domain. Asparagine 97 and asparagine 129 each carry an N-linked (GlcNAc...) asparagine glycan. Residues 175–195 (MVIIFIMAVGTVAIGGYWAGS) traverse the membrane as a helical segment. Residues 196 to 221 (RDVKKRYMKHKRDDGPEKQEDEAVDV) are Cytoplasmic-facing. Residues 222–244 (TPVMTCVFVVMCCSMLVLLYYFY) form a helical membrane-spanning segment. Residues 245–248 (DLLV) lie on the Lumenal side of the membrane. The chain crosses the membrane as a helical span at residues 249-271 (YVVIGIFCLASATGLYSCLAPCV). Residues 272 to 293 (RRLPFGKCRIPNNSLPYFHKRP) are Cytoplasmic-facing. A helical membrane pass occupies residues 294 to 314 (QARMLLLALFCVAVSVVWGVF). Residues 315 to 319 (RNEDQ) are Lumenal-facing. Residues 320 to 340 (WAWVLQDALGIAFCLYMLKTI) form a helical membrane-spanning segment. The Cytoplasmic segment spans residues 341-348 (RLPTFKAC). Residues 349–369 (TLLLLVLFLYDIFFVFITPFL) traverse the membrane as a helical segment. The active site involves aspartate 359. The Lumenal portion of the chain corresponds to 370-412 (TKSGSSIMVEVATGPSDSATREKLPMVLKVPRLNSSPLALCDR). Residues 413–433 (PFSLLGFGDILVPGLLVAYCH) traverse the membrane as a helical segment. Residue aspartate 421 is part of the active site. Residues 434 to 445 (RFDIQVQSSRVY) lie on the Cytoplasmic side of the membrane. The helical transmembrane segment at 446–466 (FVACTIAYGVGLLVTFVALAL) threads the bilayer. The Lumenal portion of the chain corresponds to 467–470 (MQRG). A helical transmembrane segment spans residues 471-491 (QPALLYLVPCTLVTSCAVALW). A PAL motif is present at residues 472 to 474 (PAL). The Cytoplasmic segment spans residues 492–592 (RRELGVFWTG…SPVTQPGASA (101 aa)). Residues 512–524 (PWAPAPADGPQPP) show a composition bias toward pro residues. A disordered region spans residues 512–592 (PWAPAPADGP…SPVTQPGASA (81 aa)). The span at 580 to 592 (AQPSPVTQPGASA) shows a compositional bias: polar residues.

It belongs to the peptidase A22B family. As to quaternary structure, monomer. Homodimer. Interacts with ITM2B. Interacts with TNF. Interacts with the simian foamy virus envelope glycoprotein gp130 and its processed leader peptide gp18LP; preferentially interacts with the leader peptide gp18LP. Glycosylated. Expressed predominantly in adrenal cortex and mammary gland.

Its subcellular location is the cell membrane. The protein localises to the golgi apparatus membrane. The protein resides in the lysosome membrane. It is found in the endosome membrane. It localises to the membrane. In terms of biological role, intramembrane-cleaving aspartic protease (I-CLiP) that cleaves type II membrane signal peptides in the hydrophobic plane of the membrane. Functions in ITM2B and TNF processing. Catalyzes the intramembrane cleavage of the anchored fragment of shed TNF-alpha (TNF), which promotes the release of the intracellular domain (ICD) for signaling to the nucleus. May play a role in the regulation of innate and adaptive immunity. Catalyzes the intramembrane cleavage of the simian foamy virus processed leader peptide gp18 of the envelope glycoprotein gp130 dependently of prior ectodomain shedding by furin or furin-like proprotein convertase (PC)-mediated cleavage proteolysis. This chain is Signal peptide peptidase-like 2B, found in Homo sapiens (Human).